A 380-amino-acid polypeptide reads, in one-letter code: Glucose-1-phosphate adenylyltransferase (380 aa).

Residues Gly164, 179 to 180, and Ser190 contribute to the alpha-D-glucose 1-phosphate site; that span reads EK.

This sequence belongs to the bacterial/plant glucose-1-phosphate adenylyltransferase family. Homotetramer.

It catalyses the reaction alpha-D-glucose 1-phosphate + ATP + H(+) = ADP-alpha-D-glucose + diphosphate. It participates in glycan biosynthesis; glycogen biosynthesis. Functionally, involved in the biosynthesis of ADP-glucose, a building block required for the elongation reactions to produce glycogen. Catalyzes the reaction between ATP and alpha-D-glucose 1-phosphate (G1P) to produce pyrophosphate and ADP-Glc. The protein is Glucose-1-phosphate adenylyltransferase of Lactococcus lactis subsp. cremoris (strain SK11).